A 168-amino-acid polypeptide reads, in one-letter code: Small ribosomal subunit protein uS7c (168 aa).

The protein belongs to the universal ribosomal protein uS7 family. As to quaternary structure, part of the 30S ribosomal subunit.

It localises to the plastid. The protein resides in the chloroplast. Functionally, one of the primary rRNA binding proteins, it binds directly to 16S rRNA where it nucleates assembly of the head domain of the 30S subunit. This chain is Small ribosomal subunit protein uS7c (rps7), found in Chlamydomonas reinhardtii (Chlamydomonas smithii).